A 1253-amino-acid polypeptide reads, in one-letter code: Structural polyprotein (1253 aa).

Positions 43-77 (VQAQQMQQLISAVSALTTKQNGKAPKKPKKKPQKA) are host transcription inhibition. The segment at 58–110 (LTTKQNGKAPKKPKKKPQKAKAKKNEQQKKNENKKPPPKQKNPAKKKKPGKRE) is disordered. Positions 66–79 (APKKPKKKPQKAKA) are enriched in basic residues. The Nuclear localization signal signature appears at 70 to 106 (PKKKPQKAKAKKNEQQKKNENKKPPPKQKNPAKKKKP). Residues 80 to 92 (KKNEQQKKNENKK) are compositionally biased toward basic and acidic residues. Residues 90 to 121 (NKKPPPKQKNPAKKKKPGKRERMCMKIENDCI) are binding to the viral RNA. Basic residues predominate over residues 93–108 (PPPKQKNPAKKKKPGK). Positions 106–120 (PGKRERMCMKIENDC) are ribosome-binding. Cysteines 120 and 135 form a disulfide. Residues 120–268 (CIFEVKLDGK…RYTPEGTEEW (149 aa)) form the Peptidase S3 domain. His-146 functions as the Charge relay system in the catalytic mechanism. The Nuclear export signal motif lies at 151–161 (IDNPDLAKLTY). Residues 162 to 167 (KKSSKY) are interaction with spike glycoprotein E2. Asp-168 serves as the catalytic Charge relay system. The tract at residues 190–200 (PEGHYNWHHGA) is dimerization of the capsid protein. Residue Ser-220 is the Charge relay system of the active site. Residues 226–230 (DNKGR) form a dimerization of the capsid protein region. Positions 269–280 (SAALMMCVLANV) are functions as an uncleaved signal peptide for the precursor of protein E3/E2. 3 disulfides stabilise this stretch: Cys-275–Cys-284, Cys-289–Cys-293, and Cys-292–Cys-324. The N-linked (GlcNAc...) asparagine; by host glycan is linked to Asn-279. Asn-325 carries N-linked (GlcNAc...) asparagine; by host glycosylation. At 333–694 (SVTKHFNVYK…EIILYYYGLY (362 aa)) the chain is on the extracellular side. 6 disulfides stabilise this stretch: Cys-351/Cys-457, Cys-354/Cys-360, Cys-423/Cys-437, Cys-485/Cys-597, Cys-533/Cys-557, and Cys-535/Cys-552. Interaction with host Mxra8 receptor regions lie at residues 358–361 (QFCY) and 394–396 (HEH). Positions 516-519 (QSGN) are interaction with host Mxra8 receptor. Asn-532 carries an N-linked (GlcNAc...) asparagine; by host glycan. Positions 548–554 (TINSCKI) are interaction with host Mxra8 receptor. Residue Asn-594 is glycosylated (N-linked (GlcNAc...) asparagine; by host). The helical transmembrane segment at 695 to 715 (PAATIAAVSAAGLAVVLSLLA) threads the bilayer. Topologically, residues 716–754 (SCYMFATARRKCLTPYALTPGAVVPVTLGVLCCAPRAHA) are cytoplasmic. Residue Cys-717 is the site of S-stearoyl cysteine; by host attachment. The interaction with the capsid protein stretch occupies residues 722–726 (TARRK). Residue Cys-727 is the site of S-stearoyl cysteine; by host attachment. The transient transmembrane before p62-6K protein processing stretch occupies residues 727–747 (CLTPYALTPGAVVPVTLGVLC). Cys-727 and Cys-748 are oxidised to a cystine. S-palmitoyl cysteine; by host attachment occurs at residues Cys-747 and Cys-748. The Extracellular portion of the chain corresponds to 755-769 (ASFAESMAYLWDENQ). N-linked (GlcNAc...) asparagine; by host glycosylation is present at Asn-768. Residues 770–790 (TLFWLELATPLAAIIILVCCL) form a helical membrane-spanning segment. Topologically, residues 791–792 (KN) are cytoplasmic. The helical transmembrane segment at 793 to 813 (LLCCCKPLSFLVLVSLGTPVV) threads the bilayer. Extracellular segments lie at residues 814 to 815 (KS) and 826 to 1227 (VGFP…WVQR). Cystine bridges form between Cys-864–Cys-929, Cys-877–Cys-909, Cys-878–Cys-911, and Cys-883–Cys-893. The segment at 899–916 (VYPFMWGGAYCFCDTENT) is E1 fusion peptide loop. 2 N-linked (GlcNAc...) asparagine; by host glycosylation sites follow: Asn-956 and Asn-1085. Intrachain disulfides connect Cys-1074–Cys-1086, Cys-1116–Cys-1191, Cys-1121–Cys-1195, and Cys-1143–Cys-1185. The chain crosses the membrane as a helical span at residues 1228-1248 (VAGGLGGLTLAAVAVLILVTC). Cys-1248 carries the S-palmitoyl cysteine; by host lipid modification. Residues 1249-1253 (VTMRR) lie on the Cytoplasmic side of the membrane.

As to quaternary structure, homodimer. Homomultimer. Interacts with host karyopherin KPNA4; this interaction allows the nuclear import of the viral capsid protein. Interacts with spike glycoprotein E2. Interacts with host IRAK1; the interaction leads to inhibition of IRAK1-dependent signaling. The precursor of protein E3/E2 and E1 form a heterodimer shortly after synthesis. In terms of assembly, interacts with spike glycoprotein E2. The precursor of protein E3/E2 and E1 form a heterodimer shortly after synthesis. Processing of the precursor of protein E3/E2 into E2 and E3 results in a heterodimer of the spike glycoproteins E2 and E1. Spike at virion surface are constituted of a trimer of E2-E1 heterodimers. After target cell attachment and endocytosis, E1 change conformation to form homotrimers. Interacts with 6K protein. E1/E2 heterodimer interacts with host LDLR. As to quaternary structure, interacts with spike glycoprotein E1. Processing of the precursor of protein E3/E2 into E2 and E3 results in a heterodimer of the spike glycoproteins E2 and E1. Spike at virion surface are constituted of a trimer of E2-E1 heterodimers. Interacts with 6K protein. Interacts with host MXRA8; this interaction mediates virus entry. Oligomer. Interacts with spike glycoprotein E1. Interacts with spike glycoprotein E2. Post-translationally, structural polyprotein: Specific enzymatic cleavages in vivo yield mature proteins. Capsid protein is auto-cleaved during polyprotein translation, unmasking a signal peptide at the N-terminus of the precursor of E3/E2. The remaining polyprotein is then targeted to the host endoplasmic reticulum, where host signal peptidase cleaves it into pE2, 6K and E1 proteins. pE2 is further processed to mature E3 and E2 by host furin in trans-Golgi vesicle. In terms of processing, palmitoylated via thioester bonds. These palmitoylations may induce disruption of the C-terminus transmembrane. This would result in the reorientation of E2 C-terminus from lumenal to cytoplasmic side. N-glycosylated. Post-translationally, palmitoylated via thioester bonds.

The protein localises to the virion. It is found in the host cytoplasm. It localises to the host cell membrane. Its subcellular location is the host nucleus. The protein resides in the virion membrane. The protein localises to the host Golgi apparatus. It is found in the host trans-Golgi network. It localises to the host endoplasmic reticulum. It catalyses the reaction Autocatalytic release of the core protein from the N-terminus of the togavirus structural polyprotein by hydrolysis of a -Trp-|-Ser- bond.. Functionally, forms an icosahedral capsid with a T=4 symmetry composed of 240 copies of the capsid protein surrounded by a lipid membrane through which penetrate 80 spikes composed of trimers of E1-E2 heterodimers. The capsid protein binds to the viral RNA genome at a site adjacent to a ribosome binding site for viral genome translation following genome release. Possesses a protease activity that results in its autocatalytic cleavage from the nascent structural protein. Following its self-cleavage, the capsid protein transiently associates with ribosomes, and within several minutes the protein binds to viral RNA and rapidly assembles into icosahedric core particles. The resulting nucleocapsid eventually associates with the cytoplasmic domain of the spike glycoprotein E2 at the cell membrane, leading to budding and formation of mature virions. In case of infection, new virions attach to target cells and after clathrin-mediated endocytosis their membrane fuses with the host endosomal membrane. This leads to the release of the nucleocapsid into the cytoplasm, followed by an uncoating event necessary for the genomic RNA to become accessible. The uncoating might be triggered by the interaction of capsid proteins with ribosomes. Binding of ribosomes would release the genomic RNA since the same region is genomic RNA-binding and ribosome-binding. Specifically inhibits interleukin-1 receptor-associated kinase 1/IRAK1-dependent signaling during viral entry, representing a means by which the alphaviruses may evade innate immune detection and activation prior to viral gene expression. Provides the signal sequence for the translocation of the precursor of protein E3/E2 to the host endoplasmic reticulum. Furin-cleaved E3 remains associated with spike glycoprotein E1 and mediates pH protection of the latter during the transport via the secretory pathway. After virion release from the host cell, the assembly protein E3 is gradually released in the extracellular space. In terms of biological role, plays a role in viral attachment to target host cell, by binding to the cell receptor MXRA8. The host LDLR may also act as a cell receptor for viral entry. Synthesized as a p62 precursor which is processed by furin at the cell membrane just before virion budding, giving rise to E2-E1 heterodimer. The p62-E1 heterodimer is stable, whereas E2-E1 is unstable and dissociate at low pH. p62 is processed at the last step, presumably to avoid E1 fusion activation before its final export to cell surface. E2 C-terminus contains a transitory transmembrane that would be disrupted by palmitoylation, resulting in reorientation of the C-terminal tail from lumenal to cytoplasmic side. This step is critical since E2 C-terminus is involved in budding by interacting with capsid proteins. This release of E2 C-terminus in cytoplasm occurs lately in protein export, and precludes premature assembly of particles at the endoplasmic reticulum membrane. Its function is as follows. Acts as a viroporin that participates in virus glycoprotein processing and transport to the plasma membrane, cell permeabilization and budding of viral particles. Disrupts the calcium homeostasis of the cell, probably at the endoplasmic reticulum level. This leads to cytoplasmic calcium elevation. Because of its lipophilic properties, the 6K protein is postulated to influence the selection of lipids that interact with the transmembrane domains of the glycoproteins, which, in turn, affects the deformability of the bilayer required for the extreme curvature that occurs as budding proceeds. Present in low amount in virions, about 3% compared to viral glycoproteins. Functionally, class II viral fusion protein. Fusion activity is inactive as long as E1 is bound to E2 in mature virion. After virus attachment to target cell via host MXRA8 and endocytosis, acidification of the endosome induce dissociation of E1/E2 heterodimer and concomitant trimerization of the E1 subunits. This E1 trimer is fusion active, and promotes release of viral nucleocapsid in cytoplasm after endosome and viral membrane fusion. Efficient fusion requires the presence of cholesterol and sphingolipid in the target membrane. This chain is Structural polyprotein, found in Aedes vexans (Inland floodwater mosquito).